Consider the following 439-residue polypeptide: Alpha-1,3-mannosyl-glycoprotein 4-beta-N-acetylglucosaminyltransferase-like protein MGAT4E (439 aa).

It participates in protein modification; protein glycosylation. Its function is as follows. Glycosyltransferase-like protein that may participate in the transfer of N-acetylglucosamine (GlcNAc) to the core mannose residues of N-linked glycans. The polypeptide is Alpha-1,3-mannosyl-glycoprotein 4-beta-N-acetylglucosaminyltransferase-like protein MGAT4E (Mus musculus (Mouse)).